The chain runs to 82 residues: EMBRYO SURROUNDING FACTOR 1.2 (82 aa).

The first 23 residues, 1–23, serve as a signal peptide directing secretion; it reads MKSQTVLISIFIFSFFALHQCMQ. Disulfide bonds link Cys-40–Cys-56, Cys-45–Cys-77, Cys-54–Cys-71, and Cys-57–Cys-64.

The protein belongs to the MEG family. Expressed exclusively in ovule embryo sacs and in early developing endosperms.

In terms of biological role, maternally-contributed central cell peptide regulating suspensor development and correct auxin distribution in early developing embryos. The protein is EMBRYO SURROUNDING FACTOR 1.2 (ESF1.2) of Arabidopsis thaliana (Mouse-ear cress).